The chain runs to 159 residues: Large ribosomal subunit protein bL17 (159 aa).

A compositionally biased stretch (low complexity) spans 119 to 138 (PVTPKAKPAKSTAKAAPKSK). Residues 119 to 159 (PVTPKAKPAKSTAKAAPKSKAPVEETPDEPASEETAEAEAD) form a disordered region. The segment covering 143-159 (ETPDEPASEETAEAEAD) has biased composition (acidic residues).

Belongs to the bacterial ribosomal protein bL17 family. Part of the 50S ribosomal subunit. Contacts protein L32.

The sequence is that of Large ribosomal subunit protein bL17 from Leifsonia xyli subsp. xyli (strain CTCB07).